Here is a 131-residue protein sequence, read N- to C-terminus: Sulfurtransferase TusD (131 aa).

Residue Cys-81 is the Cysteine persulfide intermediate of the active site.

The protein belongs to the DsrE/TusD family. Heterohexamer, formed by a dimer of trimers. The hexameric TusBCD complex contains 2 copies each of TusB, TusC and TusD. The TusBCD complex interacts with TusE.

Its subcellular location is the cytoplasm. Its function is as follows. Part of a sulfur-relay system required for 2-thiolation of 5-methylaminomethyl-2-thiouridine (mnm(5)s(2)U) at tRNA wobble positions. Accepts sulfur from TusA and transfers it in turn to TusE. This is Sulfurtransferase TusD from Photorhabdus laumondii subsp. laumondii (strain DSM 15139 / CIP 105565 / TT01) (Photorhabdus luminescens subsp. laumondii).